Reading from the N-terminus, the 879-residue chain is MDPTAGSKKEPGGGAATEEGVNRIAVPKPPSIEEFSIVKPISRGAFGKVYLGQKGGKLYAVKVVKKADMINKNMTHQVQAERDALALSKSPFIVHLYYSLQSANNVYLVMEYLIGGDVKSLLHIYGYFDEEMAVKYISEVALALDYLHRHGIIHRDLKPDNMLISNEGHIKLTDFGLSKVTLNRDINMMDILTTPSMAKPRQDYSRTPGQVLSLISSLGFNTPIAEKNQDPANILSACLSETSQLSQGLVCPMSVDQKDTTPYSSKLLKSCLETVASNPGMPVKCLTSNLLQSRKRLATSSASSQSHTFISSVESECHSSPKWEKDCQESDEALGPTMMSWNAVEKLCAKSANAIETKGFNKKDLELALSPIHNSSALPTTGRSCVNLAKKCFSGEVSWEAVELDVNNINMDTDTSQLGFHQSNQWAVDSGGISEEHLGKRSLKRNFELVDSSPCKKIIQNKKTCVEYKHNEMTNCYTNQNTGLTVEVQDLKLSVHKSQQNDCANKENIVNSFTDKQQTPEKLPIPMIAKNLMCELDEDCEKNSKRDYLSSSFLCSDDDRASKNISMNSDSSFPGISIMESPLESQPLDSDRSIKESSFEESNIEDPLIVTPDCQEKTSPKGVENPAVQESNQKMLGPPLEVLKTLASKRNAVAFRSFNSHINASNNSEPSRMNMTSLDAMDISCAYSGSYPMAITPTQKRRSCMPHQQTPNQIKSGTPYRTPKSVRRGVAPVDDGRILGTPDYLAPELLLGRAHGPAVDWWALGVCLFEFLTGIPPFNDETPQQVFQNILKRDIPWPEGEEKLSDNAQSAVEILLTIDDTKRAGMKELKRHPLFSDVDWENLQHQTMPFIPQPDDETDTSYFEARNTAQHLTVSGFSL.

At M1 the chain carries N-acetylmethionine. The segment at 1–23 (MDPTAGSKKEPGGGAATEEGVNR) is disordered. A Protein kinase domain is found at 35-835 (FSIVKPISRG…MKELKRHPLF (801 aa)). Residues 41-49 (ISRGAFGKV) and K62 each bind ATP. The active-site Proton acceptor is the D156. Phosphothreonine is present on residues T207 and T222. 3 positions are modified to phosphoserine: S293, S370, and S453. T519 is subject to Phosphothreonine. Residues S552 and S556 each carry the phosphoserine modification. Residues 566-632 (SMNSDSSFPG…VENPAVQESN (67 aa)) form a disordered region. Basic and acidic residues predominate over residues 589–598 (DSDRSIKESS). Phosphoserine is present on residues S631, S657, and S668. The tract at residues 700–728 (KRRSCMPHQQTPNQIKSGTPYRTPKSVRR) is disordered. Residues 706 to 716 (PHQQTPNQIKS) show a composition bias toward polar residues. Residue T722 is modified to Phosphothreonine. Phosphoserine is present on S725. At T741 the chain carries Phosphothreonine. The AGC-kinase C-terminal domain occupies 836–879 (SDVDWENLQHQTMPFIPQPDDETDTSYFEARNTAQHLTVSGFSL). A phosphoserine mark is found at S875 and S878.

Belongs to the protein kinase superfamily. AGC Ser/Thr protein kinase family. In terms of processing, phosphorylation at Thr-741 by CDK1 during M phase activates its kinase activity. Maximum phosphorylation occurs in prometaphase.

The protein resides in the cytoplasm. It localises to the cytoskeleton. The protein localises to the microtubule organizing center. Its subcellular location is the centrosome. It is found in the nucleus. The protein resides in the cleavage furrow. The enzyme catalyses L-seryl-[protein] + ATP = O-phospho-L-seryl-[protein] + ADP + H(+). It carries out the reaction L-threonyl-[protein] + ATP = O-phospho-L-threonyl-[protein] + ADP + H(+). In terms of biological role, serine/threonine kinase that plays a key role in M phase by acting as a regulator of mitosis entry and maintenance. Acts by promoting the inactivation of protein phosphatase 2A (PP2A) during M phase: does not directly inhibit PP2A but acts by mediating phosphorylation and subsequent activation of ARPP19 and ENSA at 'Ser-62' and 'Ser-67', respectively. ARPP19 and ENSA are phosphatase inhibitors that specifically inhibit the PPP2R2D (PR55-delta) subunit of PP2A. Inactivation of PP2A during M phase is essential to keep cyclin-B1-CDK1 activity high. Following DNA damage, it is also involved in checkpoint recovery by being inhibited. Phosphorylates histone protein in vitro; however such activity is unsure in vivo. May be involved in megakaryocyte differentiation. The sequence is that of Serine/threonine-protein kinase greatwall (MASTL) from Homo sapiens (Human).